The primary structure comprises 362 residues: Spermidine/putrescine import ATP-binding protein PotA (362 aa).

Residues isoleucine 4 to isoleucine 235 enclose the ABC transporter domain. Glycine 37 to threonine 44 is a binding site for ATP.

The protein belongs to the ABC transporter superfamily. Spermidine/putrescine importer (TC 3.A.1.11.1) family. The complex is composed of two ATP-binding proteins (PotA), two transmembrane proteins (PotB and PotC) and a solute-binding protein (PotD).

Its subcellular location is the cell membrane. It carries out the reaction ATP + H2O + polyamine-[polyamine-binding protein]Side 1 = ADP + phosphate + polyamineSide 2 + [polyamine-binding protein]Side 1.. In terms of biological role, part of the ABC transporter complex PotABCD involved in spermidine/putrescine import. Responsible for energy coupling to the transport system. The protein is Spermidine/putrescine import ATP-binding protein PotA of Lactobacillus delbrueckii subsp. bulgaricus (strain ATCC 11842 / DSM 20081 / BCRC 10696 / JCM 1002 / NBRC 13953 / NCIMB 11778 / NCTC 12712 / WDCM 00102 / Lb 14).